The chain runs to 467 residues: Cysteine--tRNA ligase (467 aa).

Residue cysteine 29 participates in Zn(2+) binding. The 'HIGH' region motif lies at proline 31–asparagine 41. The Zn(2+) site is built by cysteine 209, histidine 234, and glutamate 238. The 'KMSKS' region signature appears at lysine 266–serine 270. Position 269 (lysine 269) interacts with ATP. Serine 270 carries the post-translational modification Phosphoserine.

This sequence belongs to the class-I aminoacyl-tRNA synthetase family. Monomer. Zn(2+) serves as cofactor.

The protein resides in the cytoplasm. The enzyme catalyses tRNA(Cys) + L-cysteine + ATP = L-cysteinyl-tRNA(Cys) + AMP + diphosphate. In Bacillus licheniformis (strain ATCC 14580 / DSM 13 / JCM 2505 / CCUG 7422 / NBRC 12200 / NCIMB 9375 / NCTC 10341 / NRRL NRS-1264 / Gibson 46), this protein is Cysteine--tRNA ligase.